A 667-amino-acid chain; its full sequence is DNA ligase (667 aa).

NAD(+)-binding positions include 32–36 (DSEYD), 81–82 (SL), and E110. K112 (N6-AMP-lysine intermediate) is an active-site residue. 4 residues coordinate NAD(+): R133, E167, K283, and K307. Zn(2+)-binding residues include C401, C404, C419, and C424. The BRCT domain occupies 586–667 (EGHPEFSGKT…FVDKQNELNS (82 aa)).

The protein belongs to the NAD-dependent DNA ligase family. LigA subfamily. The cofactor is Mg(2+). Requires Mn(2+) as cofactor.

It catalyses the reaction NAD(+) + (deoxyribonucleotide)n-3'-hydroxyl + 5'-phospho-(deoxyribonucleotide)m = (deoxyribonucleotide)n+m + AMP + beta-nicotinamide D-nucleotide.. Its function is as follows. DNA ligase that catalyzes the formation of phosphodiester linkages between 5'-phosphoryl and 3'-hydroxyl groups in double-stranded DNA using NAD as a coenzyme and as the energy source for the reaction. It is essential for DNA replication and repair of damaged DNA. The polypeptide is DNA ligase (Staphylococcus aureus (strain Mu3 / ATCC 700698)).